The chain runs to 436 residues: Gamma-glutamyl phosphate reductase (436 aa).

It belongs to the gamma-glutamyl phosphate reductase family.

It localises to the cytoplasm. The enzyme catalyses L-glutamate 5-semialdehyde + phosphate + NADP(+) = L-glutamyl 5-phosphate + NADPH + H(+). It participates in amino-acid biosynthesis; L-proline biosynthesis; L-glutamate 5-semialdehyde from L-glutamate: step 2/2. In terms of biological role, catalyzes the NADPH-dependent reduction of L-glutamate 5-phosphate into L-glutamate 5-semialdehyde and phosphate. The product spontaneously undergoes cyclization to form 1-pyrroline-5-carboxylate. This Prochlorococcus marinus (strain SARG / CCMP1375 / SS120) protein is Gamma-glutamyl phosphate reductase.